The chain runs to 429 residues: Glutamate-1-semialdehyde 2,1-aminomutase (429 aa).

Residue Lys-267 is modified to N6-(pyridoxal phosphate)lysine.

It belongs to the class-III pyridoxal-phosphate-dependent aminotransferase family. HemL subfamily. In terms of assembly, homodimer. Pyridoxal 5'-phosphate serves as cofactor.

Its subcellular location is the cytoplasm. The catalysed reaction is (S)-4-amino-5-oxopentanoate = 5-aminolevulinate. It participates in porphyrin-containing compound metabolism; protoporphyrin-IX biosynthesis; 5-aminolevulinate from L-glutamyl-tRNA(Glu): step 2/2. In Stenotrophomonas maltophilia (strain R551-3), this protein is Glutamate-1-semialdehyde 2,1-aminomutase.